Here is a 516-residue protein sequence, read N- to C-terminus: Thiosulfate sulfurtransferase/rhodanese-like domain-containing protein 2 (516 aa).

The residue at position 269 (Ser269) is a Phosphoserine. The Rhodanese domain maps to 301–396 (EQSDTILLDC…YLEEFPDGFY (96 aa)). The active-site Cysteine persulfide intermediate is Cys355. Positions 490–516 (RELLQHVRQPVSPEPGPDAEEDGPVLV) are disordered. Residues 506 to 516 (PDAEEDGPVLV) are compositionally biased toward acidic residues.

The sequence is that of Thiosulfate sulfurtransferase/rhodanese-like domain-containing protein 2 (TSTD2) from Pongo abelii (Sumatran orangutan).